The primary structure comprises 1353 residues: ABC-type transporter MYCGRDRAFT_41235 (1353 aa).

The helical transmembrane segment at 40-60 (ASASLWNWFFFSWLNPLIAIG) threads the bilayer. Residue Asn-121 is glycosylated (N-linked (GlcNAc...) asparagine). Helical transmembrane passes span 124 to 144 (VLVWFWVGGAMKLFADVATIT), 172 to 192 (IGQGFGMAIGLALLLASGVMA), 250 to 270 (FACGYFHATWTSVIQILICLG), 271 to 291 (LTIASLGPAALTGFGLMAILV), 364 to 384 (VALSFSVPTLAAVVSFVTYAA), and 397 to 417 (ALTLFMLLRTPLLLLPVAFGA). The region spanning 129–420 (WVGGAMKLFA…LPVAFGAAAD (292 aa)) is the ABC transmembrane type-1 1 domain. In terms of domain architecture, ABC transporter 1 spans 460–684 (YRVQDHSDEK…EGGQMRRVVE (225 aa)). N-linked (GlcNAc...) asparagine glycosylation is present at Asn-481. Residue 496 to 503 (GPVGAGKS) participates in ATP binding. Positions 687 to 720 (ASKSSAEEEEVEDGDLKDGVPSTDGGDASQTTSN) are disordered. A run of 6 helical transmembrane segments spans residues 748 to 768 (PAFTLTFFILSMLIFQGGSIL), 796 to 816 (LGVSQAIGLLAMSSIFGFFIF), 864 to 882 (AFRMLLSTVAQVVGAVVLI), 888 to 907 (WFLLAVFVIVILYILTGMYY), 973 to 993 (LSVRLDLLGTCLVLLVGLIVV), and 1002 to 1022 (AQGGVALSYIVTVQAVFGFMI). An ABC transmembrane type-1 2 domain is found at 756–1030 (ILSMLIFQGG…MIRQSAEIEN (275 aa)). The 265-residue stretch at 1070–1334 (IEMRDVVFTH…EGGHFRSLCS (265 aa)) folds into the ABC transporter 2 domain. 1104-1111 (GRTGSGKS) lines the ATP pocket. Residues 1191-1200 (QSSAETLTSS) show a composition bias toward polar residues. The disordered stretch occupies residues 1191–1223 (QSSAETLTSSDQEKSSPDDAAISPSSHSHSQHL). Residues 1208 to 1218 (DDAAISPSSHS) are compositionally biased toward low complexity.

It belongs to the ABC transporter superfamily. ABCC family. Conjugate transporter (TC 3.A.1.208) subfamily.

It localises to the cell membrane. Functionally, multidrug resistance protein; part of the gene cluster 14 that mediates the biosynthesis of a ferrichrome A-like siderophors which may contribute to organismal virulence. The polypeptide is ABC-type transporter MYCGRDRAFT_41235 (Zymoseptoria tritici (strain CBS 115943 / IPO323) (Speckled leaf blotch fungus)).